The primary structure comprises 144 residues: Peptide methionine sulfoxide reductase MsrB (144 aa).

The MsrB domain maps to 5 to 128 (KEELRQRIGE…NSAALQFIPV (124 aa)). Cys117 (nucleophile) is an active-site residue.

Belongs to the MsrB Met sulfoxide reductase family.

It carries out the reaction L-methionyl-[protein] + [thioredoxin]-disulfide + H2O = L-methionyl-(R)-S-oxide-[protein] + [thioredoxin]-dithiol. The sequence is that of Peptide methionine sulfoxide reductase MsrB from Ligilactobacillus salivarius (strain UCC118) (Lactobacillus salivarius).